A 238-amino-acid chain; its full sequence is Demethylmenaquinone methyltransferase (238 aa).

S-adenosyl-L-methionine is bound by residues Thr65, Asp85, and 109 to 110 (DA).

It belongs to the class I-like SAM-binding methyltransferase superfamily. MenG/UbiE family.

It carries out the reaction a 2-demethylmenaquinol + S-adenosyl-L-methionine = a menaquinol + S-adenosyl-L-homocysteine + H(+). It participates in quinol/quinone metabolism; menaquinone biosynthesis; menaquinol from 1,4-dihydroxy-2-naphthoate: step 2/2. Methyltransferase required for the conversion of demethylmenaquinol (DMKH2) to menaquinol (MKH2). The polypeptide is Demethylmenaquinone methyltransferase (Roseiflexus sp. (strain RS-1)).